We begin with the raw amino-acid sequence, 189 residues long: Interferon alpha-B (189 aa).

Residues 1-23 form the signal peptide; sequence MAPAWSFLLALLLLSCNAICSLG. 2 cysteine pairs are disulfide-bonded: Cys-24-Cys-122 and Cys-52-Cys-162.

Belongs to the alpha/beta interferon family.

It localises to the secreted. Produced by macrophages, IFN-alpha have antiviral activities. Interferon stimulates the production of two enzymes: a protein kinase and an oligoadenylate synthetase. The chain is Interferon alpha-B (IFNAB) from Bos taurus (Bovine).